The sequence spans 1300 residues: Phospholipid-transporting ATPase IK (1300 aa).

A compositionally biased stretch (polar residues) spans 1–11 (MGTGPAQTPRS). Residues 1–98 (MGTGPAQTPR…SLGQREDLQD (98 aa)) form a disordered region. The Cytoplasmic segment spans residues 1-149 (MGTGPAQTPR…TAKYNFYSFL (149 aa)). Residues 65–74 (RRHKAQPGRA) are compositionally biased toward basic residues. A helical transmembrane segment spans residues 150–171 (PLNLYEQFHRVSNLFFLIIIIL). Residues 172–177 (QSIPDI) are Exoplasmic loop-facing. Residues 178–197 (STLPWFSLSTPMVCLLFIRA) traverse the membrane as a helical segment. Residues 198-381 (TRDLVDDMGR…TKLDLLMNKL (184 aa)) lie on the Cytoplasmic side of the membrane. The helical transmembrane segment at 382-403 (VVVIFISVVLVCLVLAFGFGFS) threads the bilayer. Topologically, residues 404 to 430 (VKEFKDHHYYLSGVHGSSVAAESFFVF) are exoplasmic loop. The chain crosses the membrane as a helical span at residues 431 to 452 (WSFLILLSVTIPMSMFILSEFI). Topologically, residues 453–995 (YLGNSVFIDW…GRWSYVRICK (543 aa)) are cytoplasmic. Asp-495 (4-aspartylphosphate intermediate) is an active-site residue. ATP-binding residues include Asp-495, Lys-496, Thr-497, Glu-596, Phe-637, Lys-660, Arg-693, Thr-763, Gly-764, Asp-765, Arg-913, and Lys-919. Asp-495 is a binding site for Mg(2+). Thr-497 is a binding site for Mg(2+). A Mg(2+)-binding site is contributed by Asp-939. ATP contacts are provided by Asn-942 and Asp-943. Asp-943 provides a ligand contact to Mg(2+). A helical membrane pass occupies residues 996–1016 (FLRYFFYKSMASMMVQVWFAC). Residues 1017–1028 (YNGFTGQPLYEG) lie on the Exoplasmic loop side of the membrane. Residues 1029–1048 (WFLALFNLLYSTLPVLYIGL) traverse the membrane as a helical segment. Topologically, residues 1049–1078 (FEQDVSAEQSLEKPELYVVGQKDELFNYWV) are cytoplasmic. The helical transmembrane segment at 1079–1100 (FVQAIAHGVTTSLVNFFMTLWI) threads the bilayer. Topologically, residues 1101–1112 (SRDTAGPASFSD) are exoplasmic loop. A helical membrane pass occupies residues 1113-1135 (HQSFAVVVALSCLLSITMEVILI). Residues 1136–1141 (IKYWTA) are Cytoplasmic-facing. A helical transmembrane segment spans residues 1142-1162 (LCVATILLSLGFYAIMTTTTQ). Residues 1163–1182 (SFWLFRVSPTTFPFLYADLS) lie on the Exoplasmic loop side of the membrane. A helical membrane pass occupies residues 1183–1207 (VMSSPSILLVVLLSVSINTFPVLAL). Topologically, residues 1208–1300 (RVIFPALKEL…EAASSPKESQ (93 aa)) are cytoplasmic. Positions 1272–1300 (RGPGVSSDIASESLDPSDEEAASSPKESQ) are disordered.

This sequence belongs to the cation transport ATPase (P-type) (TC 3.A.3) family. Type IV subfamily. Mg(2+) serves as cofactor. In terms of tissue distribution, isoform 3 was only detected in testis.

Its subcellular location is the cytoplasmic vesicle. The protein resides in the secretory vesicle. The protein localises to the acrosome membrane. It localises to the endoplasmic reticulum membrane. It carries out the reaction ATP + H2O + phospholipidSide 1 = ADP + phosphate + phospholipidSide 2.. It catalyses the reaction a 1,2-diacyl-sn-glycero-3-phospho-L-serine(out) + ATP + H2O = a 1,2-diacyl-sn-glycero-3-phospho-L-serine(in) + ADP + phosphate + H(+). Functionally, P4-ATPase flippase which catalyzes the hydrolysis of ATP coupled to the transport of aminophospholipids from the outer to the inner leaflet of various membranes and ensures the maintenance of asymmetric distribution of phospholipids. Phospholipid translocation also seems to be implicated in vesicle formation and in uptake of lipid signaling molecules. May be responsible for the maintenance of asymmetric distribution of phosphatidylserine (PS) in spermatozoa membranes. Involved in acrosome reactions and binding of spermatozoa to zona pellucida. In Homo sapiens (Human), this protein is Phospholipid-transporting ATPase IK.